Consider the following 1468-residue polypeptide: MSSKSEKLEKLRKLQAARNGTSIDDYEGDESDGDRIYDEIDEKEYRARKRQELLHDDFVVDDDGVGYVDRGVEEDWREVDNSSSDEDTGNLASKDSKRKKNIKREKDHQITDMLRTQHSKSTLLAHAKKSQKKSIPIDNFDDILGEFESGEVEKPNILLPSKLRENLNSSPTSEFKSSIKRVNGNDESSHDAGISKKVKIDPDSSTDKYLEIESSPLKLQSRKLRYANDVQDLLDDVENSPVVATKRQNVLQDTLLANPPSAQSLADEEDDEDSDEDIILKRRTMRSVTTTRRVNIDSRSNPSTSPFVTAPGTPIGIKGLTPSKSLQSNTDVATLAVNVKKEDVVDPETDTFQMFWLDYCEVNNTLILFGKVKLKDDNCVSAMVQINGLCRELFFLPREGKTPTDIHEEIIPLLMDKYGLDNIRAKPQKMKYSFELPDIPSESDYLKVLLPYQTPKSSRDTIPSDLSSDTFYHVFGGNSNIFESFVIQNRIMGPCWLDIKGADFNSIRNASHCAVEVSVDKPQNITPTTTKTMPNLRCLSLSIQTLMNPKENKQEIVSITLSAYRNISLDSPIPENIKPDDLCTLVRPPQSTSFPLGLAALAKQKLPGRVRLFNNEKAMLSCFCAMLKVEDPDVIIGHRLQNVYLDVLAHRMHDLNIPTFSSIGRRLRRTWPEKFGRGNSNMNHFFISDICSGRLICDIANEMGQSLTPKCQSWDLSEMYQVTCEKEHKPLDIDYQNPQYQNDVNSMTMALQENITNCMISAEVSYRIQLLTLTKQLTNLAGNAWAQTLGGTRAGRNEYILLHEFSRNGFIVPDKEGNRSRAQKQRQNEENADAPVNSKKAKYQGGLVFEPEKGLHKNYVLVMDFNSLYPSIIQEFNICFTTVDRNKEDIDELPSVPPSEVDQGVLPRLLANLVDRRREVKKVMKTETDPHKRVQCDIRQQALKLTANSMYGCLGYVNSRFYAKPLAMLVTNKGREILMNTRQLAESMNLLVVYGDTDSVMIDTGCDNYADAIKIGLGFKRLVNERYRLLEIDIDNVFKKLLLHAKKKYAALTVNLDKNGNGTTVLEVKGLDMKRREFCPLSRDVSIHVLNTILSDKDPEEALQEVYDYLEDIRIKVETNNIRIDKYKINMKLSKDPKAYPGGKNMPAVQVALRMRKAGRVVKAGSVITFVITKQDEIDNAADTPALSVAERAHALNEVMIKSNNLIPDPQYYLEKQIFAPVERLLERIDSFNVVRLSEALGLDSKKYFRREGGNNNGEDINNLQPLETTITDVERFKDTVTLELSCPSCDKRFPFGGIVSSNYYRVSYNGLQCKHCEQLFTPLQLTSQIEHSIRAHISLYYAGWLQCDDSTCGIVTRQVSVFGKRCLNDGCTGVMRYKYSDKQLYNQLLYFDSLFDCEKNKKQELKPIYLPDDLDYPKEQLTESSIKALTEQNRELMETGRSVVQKYLNDCGRRYVDMTSIFDFMLN.

Basic and acidic residues predominate over residues 1-12; the sequence is MSSKSEKLEKLR. Disordered stretches follow at residues 1 to 34, 71 to 135, and 166 to 205; these read MSSK…SDGD, GVEE…KKSI, and NLNS…PDSS. N-acetylserine is present on Ser2. Ser31 is subject to Phosphoserine. Basic and acidic residues predominate over residues 71 to 80; that stretch reads GVEEDWREVD. Residues Ser82, Ser83, Ser84, Ser169, and Ser170 each carry the phosphoserine modification. Residues 166 to 176 are compositionally biased toward polar residues; it reads NLNSSPTSEFK. Thr172 carries the post-translational modification Phosphothreonine. Residues 183-205 show a composition bias toward basic and acidic residues; that stretch reads NGNDESSHDAGISKKVKIDPDSS. Residues Ser240 and Ser274 each carry the phosphoserine modification. Residues 256–275 are disordered; it reads LANPPSAQSLADEEDDEDSD. Acidic residues predominate over residues 266–275; it reads ADEEDDEDSD. 2 positions are modified to phosphothreonine: Thr309 and Thr313. Residues 813–837 are disordered; that stretch reads PDKEGNRSRAQKQRQNEENADAPVN. Residues 1246–1381 form a DNA-binding region; the sequence is KKYFRREGGN…CTGVMRYKYS (136 aa). The Zn(2+) site is built by Cys1287, Cys1290, Cys1314, Cys1317, Cys1348, Cys1353, Cys1367, and Cys1372. The CysA-type zinc-finger motif lies at 1287-1317; the sequence is CPSCDKRFPFGGIVSSNYYRVSYNGLQCKHC. The CysB motif motif lies at 1348–1372; it reads CDDSTCGIVTRQVSVFGKRCLNDGC.

It belongs to the DNA polymerase type-B family. As to quaternary structure, DNA polymerase alpha:primase is a four subunit enzyme complex, which is assembled throughout the cell cycle, and consists of the two DNA polymerase subunits A POL1 and B POL12, and the DNA primase large PRI2 and small PRI1 subunits. Subunit B POL12 binds to subunit A POL1. POL1 interacts with CDC13, POB3, SPT16 and MCM10.

The protein resides in the nucleus. The enzyme catalyses DNA(n) + a 2'-deoxyribonucleoside 5'-triphosphate = DNA(n+1) + diphosphate. Its function is as follows. Catalytic component of DNA polymerase alpha, which in complex with DNA primase (DNA polymerase alpha:primase) constitutes a replicative polymerase. POL1 has a role in promoting telomere replication during interaction with CDC13. This chain is DNA polymerase alpha catalytic subunit A (POL1), found in Saccharomyces cerevisiae (strain ATCC 204508 / S288c) (Baker's yeast).